We begin with the raw amino-acid sequence, 425 residues long: Beta-1,4-galactosyltransferase galt-1 (425 aa).

Over 1–8 the chain is Cytoplasmic; it reads MPRITASK. The helical; Signal-anchor for type II membrane protein transmembrane segment at 9–29 threads the bilayer; sequence IVLLIALSFCITVIYHFPIAT. Topologically, residues 30 to 425 are lumenal; it reads RSSKEYDEYG…FDSVVGLLDL (396 aa). 2 N-linked (GlcNAc...) asparagine glycosylation sites follow: Asn109 and Asn152. Positions 189–394 constitute a GT92 domain; the sequence is KMSICVPALF…LLRVYHYKDK (206 aa).

This sequence belongs to the glycosyltransferase 92 family. Mn(2+) serves as cofactor. In terms of processing, N-glycosylated. As to expression, expressed in intestine and coelomocytes.

The protein localises to the golgi apparatus. Its subcellular location is the golgi stack membrane. With respect to regulation, inhibited by EDTA, Cu(2+) and Zn(2+). Catalyzes the transfer of beta-galactose from UDP-galactose to position 4 of alpha-1,6-linked fucose at the reducing end GlcNAc in N-glycan cores. Involved in susceptibility to the nematotoxic C.cinerea galectin Cgl2, likely by contributing to the synthesis of core alpha-1,6-fucosylated N-glycans to which Cgl2 binds. This chain is Beta-1,4-galactosyltransferase galt-1, found in Caenorhabditis elegans.